The following is a 387-amino-acid chain: F-box only protein 4 (387 aa).

Phosphoserine occurs at positions 12 and 48. The 47-residue stretch at 56 to 102 (ASTLTRLPIDVQLYILSFLSPHDLCQLGSTNHYWNETVRDPILWRYF) folds into the F-box domain.

Homodimer. Part of the SCF (SKP1-CUL1-F-box) E3 ubiquitin-protein ligase complex SCF(FBXO4) formed of CUL1, SKP1, RBX1 and FBXO4. Interacts with TERF1; this interaction is prevented in the presence of GNL3L. Identified in a complex with CRYAB and CCND1. Post-translationally, phosphorylation at Ser-12 varies during the cell cycle. It is low in resting cells and high in the S phase and the G2/M phase of the cell cycle. Phosphorylation is decreased during late G1 phase. Phosphorylation at Ser-12 promotes homodimerization and is necessary for optimal ubiquitin ligase activity towards CCND1.

It localises to the cytoplasm. Its pathway is protein modification; protein ubiquitination. Functionally, substrate recognition component of a SCF (SKP1-CUL1-F-box protein) E3 ubiquitin-protein ligase complex that mediates the ubiquitination and subsequent proteasomal degradation of target proteins. Promotes ubiquitination of cyclin-D1 (CCND1) and its subsequent proteasomal degradation. However, it does not act as a major regulator of CCND1 stability during the G1/S transition. Recognizes TERF1 and promotes its ubiquitination together with UBE2D1. Promotes ubiquitination of FXR1 following phosphorylation of FXR1 by GSK3B, leading to FXR1 degradation by the proteasome. This Homo sapiens (Human) protein is F-box only protein 4 (FBXO4).